Here is a 123-residue protein sequence, read N- to C-terminus: Small ribosomal subunit protein uS12 (123 aa).

The residue at position 89 (Asp-89) is a 3-methylthioaspartic acid. The tract at residues 103–123 is disordered; sequence DTSGVQDRRQGRSKYGAKRPK. The segment covering 113–123 has biased composition (basic residues); it reads GRSKYGAKRPK.

Belongs to the universal ribosomal protein uS12 family. Part of the 30S ribosomal subunit. Contacts proteins S8 and S17. May interact with IF1 in the 30S initiation complex.

With S4 and S5 plays an important role in translational accuracy. In terms of biological role, interacts with and stabilizes bases of the 16S rRNA that are involved in tRNA selection in the A site and with the mRNA backbone. Located at the interface of the 30S and 50S subunits, it traverses the body of the 30S subunit contacting proteins on the other side and probably holding the rRNA structure together. The combined cluster of proteins S8, S12 and S17 appears to hold together the shoulder and platform of the 30S subunit. The sequence is that of Small ribosomal subunit protein uS12 from Nitratidesulfovibrio vulgaris (strain ATCC 29579 / DSM 644 / CCUG 34227 / NCIMB 8303 / VKM B-1760 / Hildenborough) (Desulfovibrio vulgaris).